The chain runs to 397 residues: Small ribosomal subunit protein mS29 (397 aa).

Residues 1–17 (MLKGMTRLVSRVHKLDP) constitute a mitochondrion transit peptide. 2 positions are modified to N6-acetyllysine: Lys174 and Lys206.

Belongs to the mitochondrion-specific ribosomal protein mS29 family. Component of the mitochondrial ribosome small subunit (28S) which comprises a 12S rRNA and about 30 distinct proteins. Interacts with DELE1. Interacts with NOA1.

The protein resides in the mitochondrion. It catalyses the reaction GTP + H2O = GDP + phosphate + H(+). Functionally, as a component of the mitochondrial small ribosomal subunit, it plays a role in the translation of mitochondrial mRNAs. Involved in mediating interferon-gamma-induced cell death. Displays GTPase activity in vitro. The chain is Small ribosomal subunit protein mS29 from Bos taurus (Bovine).